Consider the following 835-residue polypeptide: Cap-specific mRNA (nucleoside-2'-O-)-methyltransferase 1 (835 aa).

A disordered region spans residues 1-67 (MKRRTDPECT…EGKQHSSDSF (67 aa)). A Bipartite nuclear localization signal motif is present at residues 2–19 (KRRTDPECTAPIKKQKKR). 5 positions are modified to phosphoserine: S28, S31, S53, S66, and S91. A compositionally biased stretch (polar residues) spans 37–54 (SSVSHGAKASTTSLSGSD). Residues 57-67 (TEGKQHSSDSF) show a composition bias toward basic and acidic residues. The G-patch domain maps to 87–133 (YNSVSQKLMAKMGFREGEGLGKYSQGRKDIVEASSQKGRRGLGLTLR). K108 is subject to N6-acetyllysine. Substrate is bound by residues 203 to 207 (KSVFD) and R218. The 220-residue stretch at 231–450 (FFLNRAAMKM…ERYVVCKGLK (220 aa)) folds into the RrmJ-type SAM-dependent 2'-O-MTase domain. N234 is an S-adenosyl-L-methionine binding site. Residue K239 is part of the active site. S-adenosyl-L-methionine contacts are provided by residues 277–283 (CAGPGGF) and 335–336 (DI). D364 is a catalytic residue. 374–376 (NLQ) contributes to the substrate binding site. K404 acts as the Proton acceptor in catalysis. Residue N439 participates in substrate binding. Residues 727-835 (SSGTPKLSYT…VLSFIQMHRA (109 aa)) are interaction with POLR2A. The WW domain maps to 752-786 (RTVNEPWTMGFSKSFKKKFFYNKKTKDSTFDLPAD).

As to quaternary structure, interacts with POLR2A (via C-terminus).

The protein resides in the nucleus. It carries out the reaction a 5'-end (N(7)-methyl 5'-triphosphoguanosine)-ribonucleoside in mRNA + S-adenosyl-L-methionine = a 5'-end (N(7)-methyl 5'-triphosphoguanosine)-(2'-O-methyl-ribonucleoside) in mRNA + S-adenosyl-L-homocysteine + H(+). Its function is as follows. S-adenosyl-L-methionine-dependent methyltransferase that mediates mRNA cap1 2'-O-ribose methylation to the 5'-cap structure of mRNAs. Methylates the ribose of the first nucleotide of a m(7)GpppG-capped mRNA and small nuclear RNA (snRNA) to produce m(7)GpppRm (cap1). Displays a preference for cap0 transcripts. Cap1 modification is linked to higher levels of translation. May be involved in the interferon response pathway. This chain is Cap-specific mRNA (nucleoside-2'-O-)-methyltransferase 1 (CMTR1), found in Homo sapiens (Human).